A 187-amino-acid chain; its full sequence is Small ribosomal subunit protein uS5 (187 aa).

Residues 20–83 (FADRLVAINR…EQAKRQMIRV (64 aa)) enclose the S5 DRBM domain. The disordered stretch occupies residues 155–187 (KKEQSPRSVAQRRGKKVADILPKRDEAPAEAEA). A compositionally biased stretch (basic and acidic residues) spans 170–181 (KVADILPKRDEA).

It belongs to the universal ribosomal protein uS5 family. In terms of assembly, part of the 30S ribosomal subunit. Contacts proteins S4 and S8.

In terms of biological role, with S4 and S12 plays an important role in translational accuracy. Its function is as follows. Located at the back of the 30S subunit body where it stabilizes the conformation of the head with respect to the body. The polypeptide is Small ribosomal subunit protein uS5 (Ruegeria sp. (strain TM1040) (Silicibacter sp.)).